A 459-amino-acid chain; its full sequence is Ribulose bisphosphate carboxylase large chain (459 aa).

K4 carries the N6,N6,N6-trimethyllysine modification. Substrate-binding residues include N113 and T163. K165 serves as the catalytic Proton acceptor. K167 contributes to the substrate binding site. Positions 191, 193, and 194 each coordinate Mg(2+). K191 is subject to N6-carboxylysine. H284 serves as the catalytic Proton acceptor. Residues R285, H317, and S369 each contribute to the substrate site.

It belongs to the RuBisCO large chain family. Type I subfamily. Heterohexadecamer of 8 large chains and 8 small chains; disulfide-linked. The disulfide link is formed within the large subunit homodimers. Mg(2+) is required as a cofactor. The disulfide bond which can form in the large chain dimeric partners within the hexadecamer appears to be associated with oxidative stress and protein turnover.

The protein localises to the plastid. It localises to the chloroplast. The catalysed reaction is 2 (2R)-3-phosphoglycerate + 2 H(+) = D-ribulose 1,5-bisphosphate + CO2 + H2O. It catalyses the reaction D-ribulose 1,5-bisphosphate + O2 = 2-phosphoglycolate + (2R)-3-phosphoglycerate + 2 H(+). Its function is as follows. RuBisCO catalyzes two reactions: the carboxylation of D-ribulose 1,5-bisphosphate, the primary event in carbon dioxide fixation, as well as the oxidative fragmentation of the pentose substrate in the photorespiration process. Both reactions occur simultaneously and in competition at the same active site. The polypeptide is Ribulose bisphosphate carboxylase large chain (Nypa fruticans (Nypa palm)).